The primary structure comprises 425 residues: Glutamate-1-semialdehyde 2,1-aminomutase (425 aa).

The residue at position 265 (Lys-265) is an N6-(pyridoxal phosphate)lysine.

Belongs to the class-III pyridoxal-phosphate-dependent aminotransferase family. HemL subfamily. As to quaternary structure, homodimer. Pyridoxal 5'-phosphate serves as cofactor.

Its subcellular location is the cytoplasm. It carries out the reaction (S)-4-amino-5-oxopentanoate = 5-aminolevulinate. It participates in porphyrin-containing compound metabolism; protoporphyrin-IX biosynthesis; 5-aminolevulinate from L-glutamyl-tRNA(Glu): step 2/2. The protein is Glutamate-1-semialdehyde 2,1-aminomutase of Desulfatibacillum aliphaticivorans.